Consider the following 217-residue polypeptide: ATP-dependent Clp protease proteolytic subunit 1 (217 aa).

The tract at residues 1–24 is disordered; the sequence is MTPLTTGWHPALSPRAEEGDTPPS. Ser-108 acts as the Nucleophile in catalysis. The active site involves His-133.

The protein belongs to the peptidase S14 family. As to quaternary structure, fourteen ClpP subunits assemble into 2 heptameric rings which stack back to back to give a disk-like structure with a central cavity, resembling the structure of eukaryotic proteasomes.

Its subcellular location is the cytoplasm. The enzyme catalyses Hydrolysis of proteins to small peptides in the presence of ATP and magnesium. alpha-casein is the usual test substrate. In the absence of ATP, only oligopeptides shorter than five residues are hydrolyzed (such as succinyl-Leu-Tyr-|-NHMec, and Leu-Tyr-Leu-|-Tyr-Trp, in which cleavage of the -Tyr-|-Leu- and -Tyr-|-Trp bonds also occurs).. In terms of biological role, cleaves peptides in various proteins in a process that requires ATP hydrolysis. Has a chymotrypsin-like activity. Plays a major role in the degradation of misfolded proteins. The chain is ATP-dependent Clp protease proteolytic subunit 1 from Streptomyces avermitilis (strain ATCC 31267 / DSM 46492 / JCM 5070 / NBRC 14893 / NCIMB 12804 / NRRL 8165 / MA-4680).